The sequence spans 1044 residues: MSDSQQSITVLEELFRKLETATSETREGISSELSSFLNGNIIEHDVPEVFFDEFQKAIQSKQKALNTLGAVAYIANETNLSPSVEPYIVATVPSVCSKAGSKDNDVQLAATKALKAIASAVNPVAVKALLPHLIHSLETSNKWKEKVAVLEVISVLVDAAKEQIALRMPELIPVLSESMWDTKKGVKEAATTTITKATETVDNKDIERFIPKLIECIANPNEVPETVHLLGATTFVAEVTPATLSIMVPLLSRGLAERETSIKRKAAVIIDNMCKLVEDPQVVAPFLGKLLPGLKNNFATIADPEAREVTLKALKTLRRVGNVGEDDVLPEISHAGDVSTTLGVIKELLEPEKVAPRFTIVVEYIAAIAANLIDERIIDQQTWFTHVTPYMTIFLHEKTAKEILDDFRKRAVDNIPVGPNFQDEEDEGEDLCNCEFSLAYGAKILLNKTQLRLKRGRRYGLCGPNGAGKSTLMRSIANGQVDGFPTQDECRTVYVEHDIDNTHSDMSVLDFVYSGNVGTKDVITSKLKEFGFSDEMIEMPIASLSGGWKMKLALARAVLKDADILLLDEPTNHLDTVNVEWLVNYLNTCGITSVIVSHDSGFLDKVCQYIIHYEGLKLRKYKGNLSEFVQKCPTAQSYYELGASDLEFQFPTPGYLEGVKTKQKAIVKVSNMTFQYPGTTKPQVSDVTFQCSLSSRIAVIGPNGAGKSTLINVLTGELLPTSGEVYTHENCRIAYIKQHAFAHIESHLDKTPSEYIQWRFQTGEDRETMDRANRQINENDAEAMNKIFKIEGTPRRVAGIHSRRKFKNTYEYECSFLLGENIGMKSERWVPMMSVDNAWLPRGELIESHSKMVAEIDMKEALASGQFRALTRKEIELHCAMLGLDSELVSHSRIRGLSGGQKVKLVLAACTWQRPHLIVLDEPTNYLDRDSLGALSKALKAFEGGVIIITHSAEFTKNLTDEVWAVKDGKMTPSGHNWVAGQGAGPRIEKKEEEGDKFDAMGNKINSGKKKSKLSSAELRKKKKERMKKKKEMGDEYVSSDEDF.

Ser-2 is modified (N-acetylserine). One copy of the HEAT 1 repeat lies at Gln-5 to Ile-42. 3 residues coordinate ADP: Ile-42, His-44, and Ser-83. 6 HEAT repeats span residues Pro-86–Pro-123, Val-124–Glu-162, Leu-166–Asn-203, Asp-205–Pro-241, Ala-242–Asp-279, and Pro-285–Val-323. N6,N6,N6-trimethyllysine occurs at positions 187 and 196. ADP-binding residues include Thr-392, His-396, and Glu-397. ABC transporter domains are found at residues Asp-426–Leu-641 and Val-667–Glu-993. Asn-703 provides a ligand contact to ADP. Position 789 is an N6,N6,N6-trimethyllysine (Lys-789). ADP contacts are provided by Glu-922, Asn-925, and His-951. Thr-972 is modified (phosphothreonine). The residue at position 974 (Ser-974) is a Phosphoserine. A disordered region spans residues Gly-975–Phe-1044. The segment covering Arg-987 to Asp-999 has biased composition (basic and acidic residues). Residues Arg-1020–Lys-1031 show a composition bias toward basic residues. A phosphoserine mark is found at Ser-1039 and Ser-1040.

It belongs to the ABC transporter superfamily. ABCF family. EF3 subfamily. As to quaternary structure, monomer.

The protein localises to the cytoplasm. The catalysed reaction is ATP + H2O = ADP + phosphate + H(+). The protein operates within protein biosynthesis; polypeptide chain elongation. Its function is as follows. Ribosome-dependent ATPase that promotes the translation of proteins required for detoxification of reactive oxygen species. Required for the ATP-dependent release of deacylated tRNA from the ribosomal E-site during protein biosynthesis. Stimulates the eEF1A-dependent binding of aminoacyl-tRNA to the ribosomal A-site, which has reduced affinity for tRNA as long as the E-site is occupied. Assists translation termination by stimulating the release of nascent protein from the ribosome by release factors. The chain is Elongation factor 3B from Saccharomyces cerevisiae (strain ATCC 204508 / S288c) (Baker's yeast).